A 242-amino-acid chain; its full sequence is uncharacterized protein (242 aa).

An NADP(+)-binding site is contributed by T8–G15. S137 serves as a coordination point for substrate. The Proton acceptor role is filled by Y150.

It belongs to the short-chain dehydrogenases/reductases (SDR) family.

This is an uncharacterized protein from Bacillus subtilis (strain 168).